We begin with the raw amino-acid sequence, 330 residues long: Protein rlx (330 aa).

The segment at 220–330 (LGEDYDKGGL…EKTRGFDLEL (111 aa)) is disordered. Composition is skewed to basic and acidic residues over residues 237–269 (NEQREEQARQRELEQARREKIKRDKEREKEWAR) and 279–330 (QNRE…DLEL).

Its function is as follows. This protein is probably required for relaxation complex formation and plasmid mobilization by conjugative plasmids. In Staphylococcus aureus, this protein is Protein rlx (rlx).